The following is a 652-amino-acid chain: MKKRIRELTDLLNQYRQEYYTNDAPSVSDSEYDKLYRELVELEQTYPAYILKDSPTQLVGSTILTGFQKYQHQYPLFSLQDAFSREELNAFDQRIKSAFPEAEYLAELKIDGLSISLVYEAGVLKVGATRGDGTIGENITENIKNIKDIPKRLSQALDVTIRGEAYMSRQAFKTINEERQENGEPEFANPRNAAAGTLRQLDTRIVAKRQLATFLYQEVGLETADSQQKTLERLADLGFSVNSHYLLSSSMNDIWDFIQSIEASREELPYEIDGVVVKVNQLAIQEELGFTVKAPRWAIAYKFPAEEKEAEIVSVDWTVGRTGVVTPTANLTPVQLAGTTVSRATLHNVDYIAEKDIRIGDTVVVYKAGDIIPAVLRVVEAKRRDQAPMPIPTACPSCQSQLVHFEDEVALRCINPLCPSLVQRSLEHFASRQAMNIAGLGPAVVEKLYSAGLVHDVADIYRLSLEDLLTLDGIKEKSAEKLLAAIEQSKANSAEKLLFGLGIRHIGAKASRLILEAYGDLEALLAVTAEELAQIDGLGLVIGQSLVQYFQQEQAAQLLAELKSAGVNLAYLGQRPDQQAALFGLTVVLTGKLEKLNRTQAMEKLEQLGAKVTGSVSKKTDLVVAGSEAGSKLAKAQQLGIRIEDEDWLLNL.

NAD(+) is bound by residues aspartate 29–aspartate 33, serine 78–leucine 79, and glutamate 107. Lysine 109 (N6-AMP-lysine intermediate) is an active-site residue. NAD(+) is bound by residues arginine 130, glutamate 164, lysine 278, and lysine 302. Residues cysteine 395, cysteine 398, cysteine 413, and cysteine 418 each coordinate Zn(2+). In terms of domain architecture, BRCT spans aspartate 577 to leucine 652.

It belongs to the NAD-dependent DNA ligase family. LigA subfamily. Mg(2+) is required as a cofactor. Requires Mn(2+) as cofactor.

The catalysed reaction is NAD(+) + (deoxyribonucleotide)n-3'-hydroxyl + 5'-phospho-(deoxyribonucleotide)m = (deoxyribonucleotide)n+m + AMP + beta-nicotinamide D-nucleotide.. Its function is as follows. DNA ligase that catalyzes the formation of phosphodiester linkages between 5'-phosphoryl and 3'-hydroxyl groups in double-stranded DNA using NAD as a coenzyme and as the energy source for the reaction. It is essential for DNA replication and repair of damaged DNA. The protein is DNA ligase of Streptococcus equi subsp. equi (strain 4047).